Here is a 133-residue protein sequence, read N- to C-terminus: ATP synthase epsilon chain (133 aa).

This sequence belongs to the ATPase epsilon chain family. As to quaternary structure, F-type ATPases have 2 components, CF(1) - the catalytic core - and CF(0) - the membrane proton channel. CF(1) has five subunits: alpha(3), beta(3), gamma(1), delta(1), epsilon(1). CF(0) has three main subunits: a, b and c.

Its subcellular location is the cell membrane. Produces ATP from ADP in the presence of a proton gradient across the membrane. This Geobacillus thermodenitrificans (strain NG80-2) protein is ATP synthase epsilon chain.